The following is a 437-amino-acid chain: ATP-dependent RNA helicase RhlB (437 aa).

Residues 9–37 carry the Q motif motif; the sequence is QKFADLGLQPQVTEGLEKKGFEYCTPIQA. A Helicase ATP-binding domain is found at 40–219; the sequence is LPVLLTGQDI…FEHMHNPEHV (180 aa). Residue 53-60 participates in ATP binding; the sequence is AQTGTGKT. Positions 165–168 match the DEAD box motif; that stretch reads DEAD. Positions 245–390 constitute a Helicase C-terminal domain; sequence ALLQTLIEEE…VSEYDASALI (146 aa). The tract at residues 397 to 437 is disordered; it reads IRMRAPRVQQRRTNTGGTRSGNRKPQGRRPRQPRQSAPKQS. Positions 417–428 are enriched in basic residues; it reads GNRKPQGRRPRQ.

It belongs to the DEAD box helicase family. RhlB subfamily. As to quaternary structure, component of the RNA degradosome, which is a multiprotein complex involved in RNA processing and mRNA degradation.

The protein localises to the cytoplasm. It carries out the reaction ATP + H2O = ADP + phosphate + H(+). Its function is as follows. DEAD-box RNA helicase involved in RNA degradation. Has RNA-dependent ATPase activity and unwinds double-stranded RNA. In Vibrio parahaemolyticus serotype O3:K6 (strain RIMD 2210633), this protein is ATP-dependent RNA helicase RhlB.